The sequence spans 428 residues: MPAIVLIGAQWGDEGKGKATDLLGEQAQWVVRYQGGNNAGHTVVLPDGQDFALHLIPSGILTPGVTNVIGNGVVVDPGVLLDELAGLEARDIDTNRLLISADAHLIMPYHVAIDRVTERYLGKKQIGTTGRGIGPCYQDKIARVGVRVQDVLDEKILRQKVEAALDIKNQILVKVYNRRGLDVDEVVDTVLGQAEKFAGRIADTKLLINQALDRGETVLLEGSQGTLLDVDHGTYPFVTSSNPTSGGACAGSGIGPTRINGVVGILKAYTTRVGAGPFPTELTDDAGENLRKAGGEFGVTTGRSRRTGWFDAVIARYATRVNGITDYFLTKLDVLTGLQTIPVCVAYDVDGERVTEMPMTQTGVHHAVPVYEELPGWWEDVSGARSFEELPANAQAYVKRLEELSGARISAIGVGPGRDQTIVRHTMA.

GTP-binding positions include 12-18 and 40-42; these read GDEGKGK and GHT. D13 serves as the catalytic Proton acceptor. Residues D13 and G40 each contribute to the Mg(2+) site. Residues 13-16, 38-41, T129, R143, Q224, T239, and R303 contribute to the IMP site; these read DEGK and NAGH. Catalysis depends on H41, which acts as the Proton donor. Substrate is bound at residue 299–305; sequence VTTGRSR. GTP is bound by residues R305, 331–333, and 413–415; these read KLD and GVG.

This sequence belongs to the adenylosuccinate synthetase family. In terms of assembly, homodimer. Mg(2+) serves as cofactor.

It localises to the cytoplasm. It catalyses the reaction IMP + L-aspartate + GTP = N(6)-(1,2-dicarboxyethyl)-AMP + GDP + phosphate + 2 H(+). Its pathway is purine metabolism; AMP biosynthesis via de novo pathway; AMP from IMP: step 1/2. Functionally, plays an important role in the de novo pathway of purine nucleotide biosynthesis. Catalyzes the first committed step in the biosynthesis of AMP from IMP. The chain is Adenylosuccinate synthetase from Saccharopolyspora erythraea (strain ATCC 11635 / DSM 40517 / JCM 4748 / NBRC 13426 / NCIMB 8594 / NRRL 2338).